The following is a 291-amino-acid chain: Glycolipid transfer protein domain-containing protein 2 (291 aa).

An N-linked (GlcNAc...) asparagine glycan is attached at Asn276.

This sequence belongs to the GLTP family.

In Homo sapiens (Human), this protein is Glycolipid transfer protein domain-containing protein 2 (GLTPD2).